Reading from the N-terminus, the 58-residue chain is Protein translocase subunit SecE (58 aa).

A helical membrane pass occupies residues 38–58; sequence IVMAFVGLLAYLIQLVLAFII.

The protein belongs to the SecE/SEC61-gamma family. In terms of assembly, component of the Sec protein translocase complex. Heterotrimer consisting of SecY (alpha), SecG (beta) and SecE (gamma) subunits. The heterotrimers can form oligomers, although 1 heterotrimer is thought to be able to translocate proteins. Interacts with the ribosome. May interact with SecDF, and other proteins may be involved.

The protein localises to the cell membrane. Its function is as follows. Essential subunit of the Sec protein translocation channel SecYEG. Clamps together the 2 halves of SecY. May contact the channel plug during translocation. The polypeptide is Protein translocase subunit SecE (Acidianus ambivalens (Desulfurolobus ambivalens)).